We begin with the raw amino-acid sequence, 289 residues long: Oxaloacetate decarboxylase (289 aa).

Ser50 serves as a coordination point for substrate. Residue Asp88 coordinates Mg(2+). Arg159 and His235 together coordinate substrate.

It belongs to the isocitrate lyase/PEP mutase superfamily. Oxaloacetate decarboxylase family. As to quaternary structure, homotetramer; dimer of dimers. Requires Mg(2+) as cofactor.

The enzyme catalyses oxaloacetate + H(+) = pyruvate + CO2. Catalyzes the decarboxylation of oxaloacetate into pyruvate. Seems to play a role in maintaining cellular concentrations of bicarbonate and pyruvate. The protein is Oxaloacetate decarboxylase of Pseudomonas putida (strain GB-1).